A 342-amino-acid chain; its full sequence is A-type ATP synthase subunit C (342 aa).

It belongs to the V-ATPase V0D/AC39 subunit family. As to quaternary structure, has multiple subunits with at least A(3), B(3), C, D, E, F, H, I and proteolipid K(x).

The protein localises to the cell membrane. Its function is as follows. Component of the A-type ATP synthase that produces ATP from ADP in the presence of a proton gradient across the membrane. This Archaeoglobus fulgidus (strain ATCC 49558 / DSM 4304 / JCM 9628 / NBRC 100126 / VC-16) protein is A-type ATP synthase subunit C.